We begin with the raw amino-acid sequence, 412 residues long: Glucose-1-phosphate adenylyltransferase (412 aa).

Residues glycine 169, 184 to 185, and serine 201 each bind alpha-D-glucose 1-phosphate; that span reads EK.

It belongs to the bacterial/plant glucose-1-phosphate adenylyltransferase family. In terms of assembly, homotetramer.

It carries out the reaction alpha-D-glucose 1-phosphate + ATP + H(+) = ADP-alpha-D-glucose + diphosphate. The protein operates within glycan biosynthesis; glycogen biosynthesis. Functionally, involved in the biosynthesis of ADP-glucose, a building block required for the elongation reactions to produce glycogen. Catalyzes the reaction between ATP and alpha-D-glucose 1-phosphate (G1P) to produce pyrophosphate and ADP-Glc. The chain is Glucose-1-phosphate adenylyltransferase from Geobacter metallireducens (strain ATCC 53774 / DSM 7210 / GS-15).